The chain runs to 168 residues: Crossover junction endodeoxyribonuclease RuvC (168 aa).

Catalysis depends on residues Asp-11, Glu-71, and Asp-144. Positions 11, 71, and 144 each coordinate Mg(2+).

It belongs to the RuvC family. In terms of assembly, homodimer which binds Holliday junction (HJ) DNA. The HJ becomes 2-fold symmetrical on binding to RuvC with unstacked arms; it has a different conformation from HJ DNA in complex with RuvA. In the full resolvosome a probable DNA-RuvA(4)-RuvB(12)-RuvC(2) complex forms which resolves the HJ. Requires Mg(2+) as cofactor.

The protein resides in the cytoplasm. It carries out the reaction Endonucleolytic cleavage at a junction such as a reciprocal single-stranded crossover between two homologous DNA duplexes (Holliday junction).. Functionally, the RuvA-RuvB-RuvC complex processes Holliday junction (HJ) DNA during genetic recombination and DNA repair. Endonuclease that resolves HJ intermediates. Cleaves cruciform DNA by making single-stranded nicks across the HJ at symmetrical positions within the homologous arms, yielding a 5'-phosphate and a 3'-hydroxyl group; requires a central core of homology in the junction. The consensus cleavage sequence is 5'-(A/T)TT(C/G)-3'. Cleavage occurs on the 3'-side of the TT dinucleotide at the point of strand exchange. HJ branch migration catalyzed by RuvA-RuvB allows RuvC to scan DNA until it finds its consensus sequence, where it cleaves and resolves the cruciform DNA. The chain is Crossover junction endodeoxyribonuclease RuvC from Protochlamydia amoebophila (strain UWE25).